The sequence spans 372 residues: sn-glycerol-3-phosphate import ATP-binding protein UgpC (372 aa).

An ABC transporter domain is found at 2-233; the sequence is LDIQQLVKTY…PASTFVASFI (232 aa). 35–42 serves as a coordination point for ATP; it reads GPSGCGKS.

Belongs to the ABC transporter superfamily. sn-glycerol-3-phosphate importer (TC 3.A.1.1.3) family. The complex is composed of two ATP-binding proteins (UgpC), two transmembrane proteins (UgpA and UgpE) and a solute-binding protein (UgpB).

Its subcellular location is the cell inner membrane. The enzyme catalyses sn-glycerol 3-phosphate(out) + ATP + H2O = sn-glycerol 3-phosphate(in) + ADP + phosphate + H(+). Functionally, part of the ABC transporter complex UgpBAEC involved in sn-glycerol-3-phosphate (G3P) import. Responsible for energy coupling to the transport system. The sequence is that of sn-glycerol-3-phosphate import ATP-binding protein UgpC from Vibrio vulnificus (strain CMCP6).